A 268-amino-acid chain; its full sequence is GTP cyclohydrolase FolE2 (268 aa).

This sequence belongs to the GTP cyclohydrolase IV family.

It catalyses the reaction GTP + H2O = 7,8-dihydroneopterin 3'-triphosphate + formate + H(+). Its pathway is cofactor biosynthesis; 7,8-dihydroneopterin triphosphate biosynthesis; 7,8-dihydroneopterin triphosphate from GTP: step 1/1. Converts GTP to 7,8-dihydroneopterin triphosphate. In Methylococcus capsulatus (strain ATCC 33009 / NCIMB 11132 / Bath), this protein is GTP cyclohydrolase FolE2.